The chain runs to 305 residues: Serine/threonine-protein phosphatase 6 catalytic subunit (305 aa).

Mn(2+)-binding residues include aspartate 54, histidine 56, aspartate 82, and asparagine 114. Residue histidine 115 is the Proton donor of the active site. Mn(2+) is bound by residues histidine 164 and histidine 238.

Belongs to the PPP phosphatase family. PP-6 (PP-V) subfamily. Requires Mn(2+) as cofactor.

It catalyses the reaction O-phospho-L-seryl-[protein] + H2O = L-seryl-[protein] + phosphate. The catalysed reaction is O-phospho-L-threonyl-[protein] + H2O = L-threonyl-[protein] + phosphate. This Dictyostelium discoideum (Social amoeba) protein is Serine/threonine-protein phosphatase 6 catalytic subunit (ppp6c).